The primary structure comprises 613 residues: Ethylene response sensor 1 (613 aa).

Transmembrane regions (helical) follow at residues 23–43 (ISDALIALAYFSIPLELIYFV), 58–78 (FGAFIILCGATHFINLWMFFM), and 95–115 (AVVSCATALMLVHIIPDLLSV). 2 residues coordinate Cu cation: C65 and H69. Residues 158-307 (DRHTILRTTL…NVADQVAVAL (150 aa)) form the GAF domain. The Histidine kinase domain maps to 350–589 (VMNHEMRTPM…SFIIRLGICN (240 aa)). Phosphohistidine; by autocatalysis is present on H353.

This sequence belongs to the ethylene receptor family. As to quaternary structure, homodimer; disulfide-linked. Heteromer with ETR1. Cu cation is required as a cofactor. Post-translationally, autophosphorylated on both His and Ser residues in the presence of manganese. Loss of His autophosphorylation in the presence of both manganese and magnesium. Expressed in etiolated seedlings, leaves, stems, roots, flowers, embryos, anthers, carpels and ovules.

It localises to the endoplasmic reticulum membrane. It catalyses the reaction ATP + protein L-histidine = ADP + protein N-phospho-L-histidine.. Its function is as follows. Ethylene receptor related to bacterial two-component regulators. Acts as a redundant negative regulator of ethylene signaling. This Arabidopsis thaliana (Mouse-ear cress) protein is Ethylene response sensor 1 (ERS1).